Here is a 166-residue protein sequence, read N- to C-terminus: Nucleotide-binding protein CV_2047 (166 aa).

Belongs to the YajQ family.

In terms of biological role, nucleotide-binding protein. The sequence is that of Nucleotide-binding protein CV_2047 from Chromobacterium violaceum (strain ATCC 12472 / DSM 30191 / JCM 1249 / CCUG 213 / NBRC 12614 / NCIMB 9131 / NCTC 9757 / MK).